An 84-amino-acid chain; its full sequence is Cell division topological specificity factor (84 aa).

Belongs to the MinE family.

Prevents the cell division inhibition by proteins MinC and MinD at internal division sites while permitting inhibition at polar sites. This ensures cell division at the proper site by restricting the formation of a division septum at the midpoint of the long axis of the cell. This is Cell division topological specificity factor from Burkholderia multivorans (strain ATCC 17616 / 249).